We begin with the raw amino-acid sequence, 47 residues long: Type II secretion system protein N (47 aa).

It belongs to the GSP N family.

Its subcellular location is the cell inner membrane. Involved in a type II secretion system (T2SS, formerly general secretion pathway, GSP) for the export of proteins. This Aeromonas salmonicida protein is Type II secretion system protein N (exeN).